The chain runs to 245 residues: E3 ubiquitin-protein ligase RNF138 (245 aa).

N-acetylalanine is present on alanine 2. The RING-type zinc-finger motif lies at cysteine 18–arginine 58. Positions 86, 89, 101, and 105 each coordinate Zn(2+). Residues cysteine 86–cysteine 105 form a C2HC RNF-type zinc finger. A disordered region spans residues valine 128–glycine 153. 2 C2H2-type zinc fingers span residues phenylalanine 157–histidine 180 and valine 187–histidine 215. The UIM domain maps to leucine 225 to valine 243.

Interacts with NLK. Interacts with XRCC5/Ku80. Interacts with RBBP8/CtIP. In terms of processing, auto-ubiquitinated.

It localises to the chromosome. It catalyses the reaction S-ubiquitinyl-[E2 ubiquitin-conjugating enzyme]-L-cysteine + [acceptor protein]-L-lysine = [E2 ubiquitin-conjugating enzyme]-L-cysteine + N(6)-ubiquitinyl-[acceptor protein]-L-lysine.. The protein operates within protein modification; protein ubiquitination. In terms of biological role, E3 ubiquitin-protein ligase involved in DNA damage response by promoting DNA resection and homologous recombination. Recruited to sites of double-strand breaks following DNA damage and specifically promotes double-strand break repair via homologous recombination. Two different, non-exclusive, mechanisms have been proposed. According to a report, regulates the choice of double-strand break repair by favoring homologous recombination over non-homologous end joining (NHEJ): acts by mediating ubiquitination of XRCC5/Ku80, leading to remove the Ku complex from DNA breaks, thereby promoting homologous recombination. According to another report, cooperates with UBE2Ds E2 ubiquitin ligases (UBE2D1, UBE2D2, UBE2D3 or UBE2D4) to promote homologous recombination by mediating ubiquitination of RBBP8/CtIP. Together with NLK, involved in the ubiquitination and degradation of TCF/LEF. Also exhibits auto-ubiquitination activity in combination with UBE2K. May act as a negative regulator in the Wnt/beta-catenin-mediated signaling pathway. In Bos taurus (Bovine), this protein is E3 ubiquitin-protein ligase RNF138 (RNF138).